A 623-amino-acid chain; its full sequence is Sterol O-acyltransferase 1 (623 aa).

The interval 20–99 is disordered; that stretch reads NSAEPSKRHS…EQAEEKYPVD (80 aa). Over residues 57–72 the composition is skewed to low complexity; the sequence is ATTTATGVAVAAAAAA. Residues 83 to 92 are compositionally biased toward acidic residues; the sequence is DGDDEQDEQA. The next 5 helical transmembrane spans lie at 195–215, 242–262, 277–297, 384–404, and 422–442; these read LESN…WIAF, LFTI…VVFV, GFVA…PVYV, ISCS…QINY, and IMGT…PVAM. Positions 504–510 match the FYXDWWN motif motif; it reads FYGDWWN. 2 consecutive transmembrane segments (helical) span residues 548 to 568 and 603 to 623; these read ATLF…FAIF and VVFT…YLTL. His-560 is a catalytic residue.

Belongs to the membrane-bound acyltransferase family. Sterol o-acyltransferase subfamily.

The protein resides in the endoplasmic reticulum membrane. In terms of biological role, sterol O-acyltransferase that catalyzes the formation of stery esters. This Saccharomyces uvarum (strain ATCC 76518 / CBS 7001 / CLIB 283 / NBRC 10550 / MCYC 623 / NCYC 2669 / NRRL Y-11845) (Yeast) protein is Sterol O-acyltransferase 1 (ARE1).